The primary structure comprises 132 residues: Fumarate reductase subunit C (132 aa).

3 helical membrane-spanning segments follow: residues 30–50, 70–90, and 110–130; these read ATSVFAVWFCIVLLYGVLCFA, IVVFLNIITLIATLYHTVTYF, and VVRNALWAVTALVSVIALVLV.

It belongs to the FrdC family. Part of an enzyme complex containing four subunits: a flavoprotein (FrdA), an iron-sulfur protein (FrdB), and two hydrophobic anchor proteins (FrdC and FrdD).

It localises to the cell inner membrane. In terms of biological role, anchors the catalytic components of the fumarate reductase complex to the cell membrane, binds quinones. The chain is Fumarate reductase subunit C from Haemophilus influenzae (strain ATCC 51907 / DSM 11121 / KW20 / Rd).